The primary structure comprises 296 residues: MSAGGPRVGSVSVDSYLFSLPLVALNVGVRRRLSLFLNPRTTAAADWTSLAEEMGFEYLEIREFETRPDPTRSLLDAWQGRSGSSVGRLLELLALLDREDILYELKDRIEEDCQKYIRNQQKQESEKPLQVARVESSVPQTKELGGITTLDDPLGQTPELFDAFICYCPSDIEFVQEMIRQLEQTDYRLKLCVSDRDVLPGTCVWSIASELIEKRCRRMVVVVSDDYLQSKECDFQTKFALSLSPGVQQKRLIPIKYKAMKKDFPSILRFITICDYTNPCTKSWFWTRLAKALSLP.

The region spanning 32–109 (RLSLFLNPRT…DILYELKDRI (78 aa)) is the Death domain. The segment at 110-155 (EEDCQKYIRNQQKQESEKPLQVARVESSVPQTKELGGITTLDDPLG) is intermediate domain. The region spanning 159-293 (ELFDAFICYC…WFWTRLAKAL (135 aa)) is the TIR domain. The residue at position 244 (Ser244) is a Phosphoserine.

In terms of assembly, homodimer. Also forms heterodimers with TIRAP. Binds to TLR2, TLR4, IRAK1, IRAK2 and IRAK4 via their respective TIR domains. Interacts with IL18R1. Interacts with BMX, IL1RL1, IKBKE and IRF7. Interacts with LRRFIP1 and LRRFIP2; this interaction positively regulates Toll-like receptor (TLR) signaling in response to agonist. Interacts with FLII. LRRFIP1 and LRRFIP2 compete with FLII for MYD88-binding. Interacts with IRF1. Upon IL1B treatment, forms a complex with PELI1, IRAK1, IRAK4 and TRAF6; this complex recruits MAP3K7/TAK1, TAB1 and TAB2 to mediate NF-kappa-B activation. Direct binding of SMAD6 to PELI1 prevents the complex formation and hence negatively regulates IL1R-TLR signaling and eventually NF-kappa-B-mediated gene expression. May interact with PIK3AP1. Interacts (via TIR domain) with DHX9 (via H2A and OB-fold regions); this interaction is direct. Interacts with OTUD4 deubiquitinase; the interaction is direct. Post-translationally, ubiquitinated; undergoes 'Lys-63'-linked polyubiquitination. OTUD4 specifically hydrolyzes 'Lys-63'-linked polyubiquitinated MYD88. Deubiquitinated by USP3 that cleaves 'Lys-63'-linked ubiquitin chains leading to inhibition of MYD88-induced NF-kappa-B signaling.

It localises to the cytoplasm. The protein localises to the nucleus. Adapter protein involved in the Toll-like receptor and IL-1 receptor signaling pathway in the innate immune response. Acts via IRAK1, IRAK2, IRF7 and TRAF6, leading to NF-kappa-B activation, cytokine secretion and the inflammatory response. Increases IL-8 transcription. Involved in IL-18-mediated signaling pathway. Activates IRF1 resulting in its rapid migration into the nucleus to mediate an efficient induction of IFN-beta, NOS2/INOS, and IL12A genes. Upon TLR8 activation by GU-rich single-stranded RNA (GU-rich RNA) derived from viruses, induces IL1B release through NLRP3 inflammasome activation. MyD88-mediated signaling in intestinal epithelial cells is crucial for maintenance of gut homeostasis and controls the expression of the antimicrobial lectin REG3G in the small intestine. The chain is Myeloid differentiation primary response protein MyD88 (Myd88) from Rattus norvegicus (Rat).